The following is a 163-amino-acid chain: SsrA-binding protein (163 aa).

Over residues 140 to 157 (RRGAIAERESKREMDRAL) the composition is skewed to basic and acidic residues. Residues 140-163 (RRGAIAERESKREMDRALARGRRR) are disordered.

This sequence belongs to the SmpB family.

It localises to the cytoplasm. Its function is as follows. Required for rescue of stalled ribosomes mediated by trans-translation. Binds to transfer-messenger RNA (tmRNA), required for stable association of tmRNA with ribosomes. tmRNA and SmpB together mimic tRNA shape, replacing the anticodon stem-loop with SmpB. tmRNA is encoded by the ssrA gene; the 2 termini fold to resemble tRNA(Ala) and it encodes a 'tag peptide', a short internal open reading frame. During trans-translation Ala-aminoacylated tmRNA acts like a tRNA, entering the A-site of stalled ribosomes, displacing the stalled mRNA. The ribosome then switches to translate the ORF on the tmRNA; the nascent peptide is terminated with the 'tag peptide' encoded by the tmRNA and targeted for degradation. The ribosome is freed to recommence translation, which seems to be the essential function of trans-translation. The protein is SsrA-binding protein of Anaeromyxobacter dehalogenans (strain 2CP-C).